A 406-amino-acid polypeptide reads, in one-letter code: Solute carrier family 22 member 18 (406 aa).

Helical transmembrane passes span Gly-8–Phe-28, Val-43–Phe-63, Ala-85–Phe-105, Leu-140–Thr-160, Ala-168–Ala-188, Phe-226–Ile-246, Ala-258–Gly-278, Leu-295–Phe-315, Leu-316–Thr-336, and Gly-374–Trp-394.

This sequence belongs to the major facilitator (TC 2.A.1) superfamily. Organic cation transporter (TC 2.A.1.19) family. In terms of assembly, interacts with RNF167. As to expression, expressed at high levels in fetal and adult kidney and liver, and extraembryonic membranes (yolk sac). Expressed at moderate levels in intestine, heart, lung and testis.

The protein resides in the apical cell membrane. Functionally, may act as a transporter of organic cations based on a proton efflux antiport mechanism. May play a role in the transport of chloroquine and quinidine-related compounds in kidney. Plays a role in the regulation of lipid metabolism. This Mus musculus (Mouse) protein is Solute carrier family 22 member 18 (Slc67a1).